Consider the following 250-residue polypeptide: Functional amyloid sbunit FapE (250 aa).

The first 27 residues, Met1 to Ala27, serve as a signal peptide directing secretion.

The protein belongs to the FapE family. As to quaternary structure, a minor component of purified amyloid fibrils. Fibrils are resistant to boiling in 2% (weight/vol) SDS and require &gt;90% (vol/vol) formic acid to dissolve.

It is found in the fimbrium. The protein resides in the secreted. In terms of biological role, a minor component of the functional amyloid in this bacterium. Upon overexpression of the endogenous six-gene locus (fapA-fapF), cells form large clumps during liquid growth, make large amounts of biofilm and produce amyloid fibrils. This Pseudomonas aeruginosa (strain ATCC 15692 / DSM 22644 / CIP 104116 / JCM 14847 / LMG 12228 / 1C / PRS 101 / PAO1) protein is Functional amyloid sbunit FapE.